Here is a 401-residue protein sequence, read N- to C-terminus: Odorant receptor 88a (401 aa).

Over 1 to 26 (MKPTEIKKPYRMEEFLRPQMFQEVAQ) the chain is Cytoplasmic. A helical transmembrane segment spans residues 27–47 (MVHFQWRRNPVDNSMVNASMV). Topologically, residues 48–52 (PFCLS) are extracellular. A helical membrane pass occupies residues 53 to 73 (AFLNVLFFGCNGWDIIGHFWL). Residues 74 to 142 (GHPANQNPPV…NFWQRYRFIR (69 aa)) are Cytoplasmic-facing. The chain crosses the membrane as a helical span at residues 143–163 (IYSHLGGPMFCVVPLALFLLT). Topologically, residues 164–191 (HEGKDTPVAQHEQLLGGWLPCGVRKDPN) are extracellular. Residues 192–212 (FYLLVWSFDLMCTTCGVSFFV) form a helical membrane-spanning segment. Residues 213-277 (TFDNLFNVMQ…LCRKYNDIFK (65 aa)) lie on the Cytoplasmic side of the membrane. Residues 278 to 298 (VAFLVSNFVGAGSLCFYLFML) traverse the membrane as a helical segment. At 299-303 (SETSD) the chain is on the extracellular side. Residues 304–324 (VLIIAQYILPTLVLVGFTFEI) traverse the membrane as a helical segment. Residues 325-370 (CLRGTQLEKASEGLESSLRSQEWYLGSRRYRKFYLLWTQYCQRTQQ) are Cytoplasmic-facing. Residues 371–391 (LGAFGLIQVNMVHFTEIMQLA) form a helical membrane-spanning segment. The Extracellular segment spans residues 392-401 (YRLFTFLKSH).

This sequence belongs to the insect chemoreceptor superfamily. Heteromeric odorant receptor channel (TC 1.A.69) family. Or49a subfamily. As to quaternary structure, interacts with Orco. Complexes exist early in the endomembrane system in olfactory sensory neurons (OSNs), coupling these complexes to the conserved ciliary trafficking pathway. In terms of tissue distribution, expressed in olfactory sensory neurons in the antenna.

The protein localises to the cell membrane. In terms of biological role, odorant receptor which mediates acceptance or avoidance behavior, depending on its substrates. The odorant receptor repertoire encodes a large collection of odor stimuli that vary widely in identity, intensity, and duration. May form a complex with Orco to form odorant-sensing units, providing sensitive and prolonged odorant signaling and calcium permeability. This Drosophila melanogaster (Fruit fly) protein is Odorant receptor 88a (Or88a).